We begin with the raw amino-acid sequence, 387 residues long: 3-ketoacyl-CoA thiolase (387 aa).

Catalysis depends on Cys-91, which acts as the Acyl-thioester intermediate. Residues His-343 and Cys-373 each act as proton acceptor in the active site.

Belongs to the thiolase-like superfamily. Thiolase family. Heterotetramer of two alpha chains (FadB) and two beta chains (FadA).

Its subcellular location is the cytoplasm. It carries out the reaction an acyl-CoA + acetyl-CoA = a 3-oxoacyl-CoA + CoA. Its pathway is lipid metabolism; fatty acid beta-oxidation. Functionally, catalyzes the final step of fatty acid oxidation in which acetyl-CoA is released and the CoA ester of a fatty acid two carbons shorter is formed. The polypeptide is 3-ketoacyl-CoA thiolase (Shewanella baltica (strain OS185)).